Here is a 105-residue protein sequence, read N- to C-terminus: UPF0235 protein RrIowa_1526 (105 aa).

The protein belongs to the UPF0235 family.

The chain is UPF0235 protein RrIowa_1526 from Rickettsia rickettsii (strain Iowa).